A 574-amino-acid chain; its full sequence is Ankyrin repeat protein B18 (574 aa).

6 ANK repeats span residues 56–87, 135–164, 167–213, 217–249, 253–285, and 327–356; these read TGYTALHCYLYNNYFTNDVLKILLNHDVNVTM, IKSRYMLLKEEDIDENIVSTLLDKGIDPNF, DGYT…NLNA, CGNTPFHLYLSIEMCNNIHMTKMLLTFNPNFKI, HGLTPILCYITSDYIQHDILVMLIHHYETNVGE, and EGKTLLHVACEYNNTQVIDYLIRINGDINA. The region spanning 541-574 is the F-box domain; that stretch reads NCLLTLLPSEIIYEILYMLTINDLYNISYPPTKV.

The chain is Ankyrin repeat protein B18 from Homo sapiens (Human).